The following is a 707-amino-acid chain: Polyribonucleotide nucleotidyltransferase (707 aa).

Aspartate 485 and aspartate 491 together coordinate Mg(2+). Residues 552–611 (PRIHTMKINSDKIKDVIGKGGAVIRALTEETGTTIEIEDDGTIKIAATEGAAAKEAIRRI) form the KH domain. An S1 motif domain is found at 621–689 (GRIYTGKVMR…RQGRIRLSMK (69 aa)).

It belongs to the polyribonucleotide nucleotidyltransferase family. Component of the RNA degradosome, which is a multiprotein complex involved in RNA processing and mRNA degradation. The cofactor is Mg(2+).

Its subcellular location is the cytoplasm. It catalyses the reaction RNA(n+1) + phosphate = RNA(n) + a ribonucleoside 5'-diphosphate. Involved in mRNA degradation. Catalyzes the phosphorolysis of single-stranded polyribonucleotides processively in the 3'- to 5'-direction. In Photobacterium profundum (strain SS9), this protein is Polyribonucleotide nucleotidyltransferase.